The chain runs to 703 residues: UvrABC system protein B (703 aa).

The Helicase ATP-binding domain maps to 33–419 (ERIENGENDV…SDGVVEQIIR (387 aa)). 46–53 (GATGTGKT) lines the ATP pocket. Residues 99–122 (YYDYYQPEAYIPQTDTYIEKDSNI) carry the Beta-hairpin motif. One can recognise a Helicase C-terminal domain in the interval 436-589 (QIDDLLAEIK…QIAYNQEHGI (154 aa)). One can recognise a UVR domain in the interval 659–694 (ADLIRQLSEQMHTAAEQLQFELAARLRDEIRDLKKE).

The protein belongs to the UvrB family. Forms a heterotetramer with UvrA during the search for lesions. Interacts with UvrC in an incision complex.

It localises to the cytoplasm. In terms of biological role, the UvrABC repair system catalyzes the recognition and processing of DNA lesions. A damage recognition complex composed of 2 UvrA and 2 UvrB subunits scans DNA for abnormalities. Upon binding of the UvrA(2)B(2) complex to a putative damaged site, the DNA wraps around one UvrB monomer. DNA wrap is dependent on ATP binding by UvrB and probably causes local melting of the DNA helix, facilitating insertion of UvrB beta-hairpin between the DNA strands. Then UvrB probes one DNA strand for the presence of a lesion. If a lesion is found the UvrA subunits dissociate and the UvrB-DNA preincision complex is formed. This complex is subsequently bound by UvrC and the second UvrB is released. If no lesion is found, the DNA wraps around the other UvrB subunit that will check the other stand for damage. In Bifidobacterium longum (strain NCC 2705), this protein is UvrABC system protein B.